Reading from the N-terminus, the 503-residue chain is Putative FBD-associated F-box protein At5g56410 (503 aa).

The 49-residue stretch at 2–50 folds into the F-box domain; that stretch reads DKITGFSDDELLVKILSFLPTKAAVTTSILSKQWKFLWMRLPKLEYHDD. Positions 361-412 constitute an FBD domain; sequence FWEQMITSVPQCLLSSLQTFKWLGNGDSIEGKDLATFILRNSCQLKTATISI.

This Arabidopsis thaliana (Mouse-ear cress) protein is Putative FBD-associated F-box protein At5g56410.